A 392-amino-acid chain; its full sequence is Aspartate aminotransferase (392 aa).

L-aspartate-binding residues include Gly-40, Trp-126, and Asn-176. Residue Lys-239 is modified to N6-(pyridoxal phosphate)lysine.

This sequence belongs to the class-I pyridoxal-phosphate-dependent aminotransferase family. As to quaternary structure, homodimer. It depends on pyridoxal 5'-phosphate as a cofactor.

Its subcellular location is the cytoplasm. It catalyses the reaction L-aspartate + 2-oxoglutarate = oxaloacetate + L-glutamate. The sequence is that of Aspartate aminotransferase from Bacillus sp. (strain YM-2).